A 148-amino-acid polypeptide reads, in one-letter code: Deoxyuridine 5'-triphosphate nucleotidohydrolase (148 aa).

Substrate-binding positions include 67 to 69 (RSG), N80, 84 to 86 (LID), and M94.

It belongs to the dUTPase family. The cofactor is Mg(2+).

It carries out the reaction dUTP + H2O = dUMP + diphosphate + H(+). It participates in pyrimidine metabolism; dUMP biosynthesis; dUMP from dCTP (dUTP route): step 2/2. Functionally, this enzyme is involved in nucleotide metabolism: it produces dUMP, the immediate precursor of thymidine nucleotides and it decreases the intracellular concentration of dUTP so that uracil cannot be incorporated into DNA. The protein is Deoxyuridine 5'-triphosphate nucleotidohydrolase of Burkholderia cenocepacia (strain ATCC BAA-245 / DSM 16553 / LMG 16656 / NCTC 13227 / J2315 / CF5610) (Burkholderia cepacia (strain J2315)).